Reading from the N-terminus, the 159-residue chain is Ascorbate-specific PTS system EIIA component (159 aa).

Residues 9 to 152 enclose the PTS EIIA type-2 domain; the sequence is VLKQHHTVRL…TSLFAVIDRV (144 aa). The active-site Tele-phosphohistidine intermediate is the His71. Residue His71 is modified to Phosphohistidine.

The protein localises to the cytoplasm. Its function is as follows. The phosphoenolpyruvate-dependent sugar phosphotransferase system (sugar PTS), a major carbohydrate active transport system, catalyzes the phosphorylation of incoming sugar substrates concomitantly with their translocation across the cell membrane. The enzyme II UlaABC PTS system is involved in ascorbate transport. In Mycoplasma pneumoniae (strain ATCC 29342 / M129 / Subtype 1) (Mycoplasmoides pneumoniae), this protein is Ascorbate-specific PTS system EIIA component (ulaC).